Consider the following 95-residue polypeptide: Aspartyl/glutamyl-tRNA(Asn/Gln) amidotransferase subunit C (95 aa).

Belongs to the GatC family. Heterotrimer of A, B and C subunits.

It catalyses the reaction L-glutamyl-tRNA(Gln) + L-glutamine + ATP + H2O = L-glutaminyl-tRNA(Gln) + L-glutamate + ADP + phosphate + H(+). It carries out the reaction L-aspartyl-tRNA(Asn) + L-glutamine + ATP + H2O = L-asparaginyl-tRNA(Asn) + L-glutamate + ADP + phosphate + 2 H(+). Functionally, allows the formation of correctly charged Asn-tRNA(Asn) or Gln-tRNA(Gln) through the transamidation of misacylated Asp-tRNA(Asn) or Glu-tRNA(Gln) in organisms which lack either or both of asparaginyl-tRNA or glutaminyl-tRNA synthetases. The reaction takes place in the presence of glutamine and ATP through an activated phospho-Asp-tRNA(Asn) or phospho-Glu-tRNA(Gln). This chain is Aspartyl/glutamyl-tRNA(Asn/Gln) amidotransferase subunit C, found in Dehalococcoides mccartyi (strain ATCC BAA-2266 / KCTC 15142 / 195) (Dehalococcoides ethenogenes (strain 195)).